Consider the following 317-residue polypeptide: Transaldolase 1 (317 aa).

Lys-132 functions as the Schiff-base intermediate with substrate in the catalytic mechanism.

This sequence belongs to the transaldolase family. Type 1 subfamily. In terms of assembly, homodimer.

The protein resides in the cytoplasm. It carries out the reaction D-sedoheptulose 7-phosphate + D-glyceraldehyde 3-phosphate = D-erythrose 4-phosphate + beta-D-fructose 6-phosphate. The protein operates within carbohydrate degradation; pentose phosphate pathway; D-glyceraldehyde 3-phosphate and beta-D-fructose 6-phosphate from D-ribose 5-phosphate and D-xylulose 5-phosphate (non-oxidative stage): step 2/3. Transaldolase is important for the balance of metabolites in the pentose-phosphate pathway. The chain is Transaldolase 1 from Shigella sonnei (strain Ss046).